The primary structure comprises 182 residues: MLTMKDIVREGNPVLREVAKPVPVPLSDEDKQTAKRMLEFLINSQNPEIAEKYSLRPGVGLAAPQIGLSKQMIAVHTTDENEKEYSLVLFNPKIISESVEMTHLEGGEGCLSVDREVQGIVPRHARITVKAINENNEEVRLKLKGFPAIVFQHEIDHLNGIMFYDRIEGWVDPYKREINPSL.

2 residues coordinate Fe cation: Cys-110 and His-153. The active site involves Glu-154. His-157 provides a ligand contact to Fe cation.

The protein belongs to the polypeptide deformylase family. Fe(2+) serves as cofactor.

The catalysed reaction is N-terminal N-formyl-L-methionyl-[peptide] + H2O = N-terminal L-methionyl-[peptide] + formate. Functionally, removes the formyl group from the N-terminal Met of newly synthesized proteins. Requires at least a dipeptide for an efficient rate of reaction. N-terminal L-methionine is a prerequisite for activity but the enzyme has broad specificity at other positions. The protein is Peptide deformylase of Halalkalibacterium halodurans (strain ATCC BAA-125 / DSM 18197 / FERM 7344 / JCM 9153 / C-125) (Bacillus halodurans).